A 176-amino-acid polypeptide reads, in one-letter code: Cytochrome b (176 aa).

Transmembrane regions (helical) follow at residues 33 to 53, 77 to 98, and 113 to 133; these read FGSL…FLAM, WMLR…YLHV, and WNVG…GYVL. Heme b contacts are provided by H83 and H97.

This sequence belongs to the cytochrome b family. The cytochrome bc1 complex contains 11 subunits: 3 respiratory subunits (MT-CYB, CYC1 and UQCRFS1), 2 core proteins (UQCRC1 and UQCRC2) and 6 low-molecular weight proteins (UQCRH/QCR6, UQCRB/QCR7, UQCRQ/QCR8, UQCR10/QCR9, UQCR11/QCR10 and a cleavage product of UQCRFS1). This cytochrome bc1 complex then forms a dimer. The cofactor is heme b.

It is found in the mitochondrion inner membrane. In terms of biological role, component of the ubiquinol-cytochrome c reductase complex (complex III or cytochrome b-c1 complex) that is part of the mitochondrial respiratory chain. The b-c1 complex mediates electron transfer from ubiquinol to cytochrome c. Contributes to the generation of a proton gradient across the mitochondrial membrane that is then used for ATP synthesis. The polypeptide is Cytochrome b (MT-CYB) (Idionycteris phyllotis (Allen's big-eared bat)).